The chain runs to 490 residues: UDP-N-acetylmuramoylalanine--D-glutamate ligase (490 aa).

124-130 (GTNGKTT) is an ATP binding site.

This sequence belongs to the MurCDEF family.

The protein resides in the cytoplasm. It carries out the reaction UDP-N-acetyl-alpha-D-muramoyl-L-alanine + D-glutamate + ATP = UDP-N-acetyl-alpha-D-muramoyl-L-alanyl-D-glutamate + ADP + phosphate + H(+). Its pathway is cell wall biogenesis; peptidoglycan biosynthesis. Functionally, cell wall formation. Catalyzes the addition of glutamate to the nucleotide precursor UDP-N-acetylmuramoyl-L-alanine (UMA). This is UDP-N-acetylmuramoylalanine--D-glutamate ligase (murD) from Mycobacterium leprae (strain TN).